Reading from the N-terminus, the 277-residue chain is Tryptophan synthase alpha chain (277 aa).

Residues Glu-51 and Glu-62 each act as proton acceptor in the active site.

Belongs to the TrpA family. As to quaternary structure, tetramer of two alpha and two beta chains.

It catalyses the reaction (1S,2R)-1-C-(indol-3-yl)glycerol 3-phosphate + L-serine = D-glyceraldehyde 3-phosphate + L-tryptophan + H2O. Its pathway is amino-acid biosynthesis; L-tryptophan biosynthesis; L-tryptophan from chorismate: step 5/5. Its function is as follows. The alpha subunit is responsible for the aldol cleavage of indoleglycerol phosphate to indole and glyceraldehyde 3-phosphate. This is Tryptophan synthase alpha chain from Phenylobacterium zucineum (strain HLK1).